Here is a 392-residue protein sequence, read N- to C-terminus: Antitrypsin (392 aa).

The first 16 residues, 1-16, serve as a signal peptide directing secretion; sequence MKTIICLFTIAIAAMA.

The protein belongs to the serpin family. In terms of tissue distribution, hemolymph.

It localises to the secreted. In terms of biological role, may play a role in the prophenoloxidase activating system in the silkworm hemolymph. The chain is Antitrypsin from Bombyx mori (Silk moth).